The chain runs to 237 residues: Transcriptional regulatory protein YvrH (237 aa).

In terms of domain architecture, Response regulatory spans 5 to 119 (SILIVDDEKA…ELAARIRAHL (115 aa)). The residue at position 55 (aspartate 55) is a 4-aspartylphosphate. A DNA-binding region (ompR/PhoB-type) is located at residues 131-230 (NQTYTYDYFT…VRGLGYRFIP (100 aa)).

Phosphorylated by YvrG.

It is found in the cytoplasm. Its function is as follows. Member of the two-component regulatory system YvrG/YvrH that positively regulates 7 transcriptional units (wprA, wapA-yxxG, dltABCDE, sunA, sunT-bdbA-yolJ-bdbB, sigO-rsoA, and sigX-rsiX), and negatively regulates the lytABC operon. The protein is Transcriptional regulatory protein YvrH (yvrH) of Bacillus subtilis (strain 168).